The following is a 465-amino-acid chain: Mitochondrial F-box protein MFB1 (465 aa).

In terms of domain architecture, F-box spans 14 to 60 (ERSLTNLPLNLLFRILSHLDMNDLQNIGKTCTLLRMLANENIVYRNA). The segment at 253–279 (FTKSRDPDYKEMTPTSTESSDSITRLR) is disordered. Positions 254-263 (TKSRDPDYKE) are enriched in basic and acidic residues. Polar residues predominate over residues 265 to 275 (TPTSTESSDSI).

The protein localises to the mitochondrion. This chain is Mitochondrial F-box protein MFB1 (MFB1), found in Saccharomyces cerevisiae (strain ATCC 204508 / S288c) (Baker's yeast).